The sequence spans 162 residues: MKKPFRIGFGFDVHRLSEGYPLWMGGVRLEHSKGLEGHSDADVLIHAICDALLGAAALRDIGYHFPPSDPQYKGIDSKILLARVMELVRSQGYELGNIDATIAAEQPKLNPHIPDMQRVLAEVIQVEVSDISLKATTTEKLGFTGREEGISAYAVALLIAAV.

Residues Asp12 and His14 each contribute to the a divalent metal cation site. 4-CDP-2-C-methyl-D-erythritol 2-phosphate-binding positions include 12–14 and 38–39; these read DVH and HS. His46 contributes to the a divalent metal cation binding site. 4-CDP-2-C-methyl-D-erythritol 2-phosphate-binding positions include 60–62, 136–139, Phe143, and Arg146; these read DIG and TTTE.

Belongs to the IspF family. In terms of assembly, homotrimer. The cofactor is a divalent metal cation.

The enzyme catalyses 4-CDP-2-C-methyl-D-erythritol 2-phosphate = 2-C-methyl-D-erythritol 2,4-cyclic diphosphate + CMP. Its pathway is isoprenoid biosynthesis; isopentenyl diphosphate biosynthesis via DXP pathway; isopentenyl diphosphate from 1-deoxy-D-xylulose 5-phosphate: step 4/6. Involved in the biosynthesis of isopentenyl diphosphate (IPP) and dimethylallyl diphosphate (DMAPP), two major building blocks of isoprenoid compounds. Catalyzes the conversion of 4-diphosphocytidyl-2-C-methyl-D-erythritol 2-phosphate (CDP-ME2P) to 2-C-methyl-D-erythritol 2,4-cyclodiphosphate (ME-CPP) with a corresponding release of cytidine 5-monophosphate (CMP). This Porphyromonas gingivalis (strain ATCC BAA-308 / W83) protein is 2-C-methyl-D-erythritol 2,4-cyclodiphosphate synthase.